A 1207-amino-acid chain; its full sequence is Disease resistance protein RPP2B (1207 aa).

Residues 15–180 enclose the TIR domain; it reads CEFDVFVSFR…EIVKNTFRML (166 aa). The active site involves glutamate 89. An NB-ARC domain is found at 201–445; sequence ELEKLLMFDN…FLDIACFFRS (245 aa). 9 LRR repeats span residues 607–630, 653–676, 677–699, 720–743, 744–767, 769–791, 792–815, 840–862, and 863–886; these read PKELVDLSLRYSHIKQLWEDEKNT, AKNLERLDLEGCTSLDLLGSVKQM, NELIYLNLRDCTSLESLPKGFKI, SESIESLHLEGTAIERVVEHIESL, HSLILLNLKNCEKLKYLPNDLYKL, SLQELVLSGCSALESLPPIKEKM, ECLEILLMDGTSIKQTPEMSCLSN, NSFLSDLYLTNCNIDKLPDKFSS, and LRSLRCLCLSRNNIETLPESIEKL.

It belongs to the disease resistance TIR-NB-LRR family.

It catalyses the reaction NAD(+) + H2O = ADP-D-ribose + nicotinamide + H(+). Disease resistance protein that cooperates with RPP2A to confer resistance to Hyaloperonospora parasitica isolate Cala2. This Arabidopsis thaliana (Mouse-ear cress) protein is Disease resistance protein RPP2B.